A 607-amino-acid polypeptide reads, in one-letter code: Terpenoid synthase 29 (607 aa).

Mg(2+) is bound by residues aspartate 358, aspartate 362, asparagine 502, threonine 506, and glutamate 510. The DDXXD motif signature appears at 358-362; the sequence is DDTYD.

It belongs to the terpene synthase family. Tpsa subfamily. Mg(2+) serves as cofactor. It depends on Mn(2+) as a cofactor. In terms of tissue distribution, predominantly expressed in flowers but also in siliques, roots, leaves and stems.

It is found in the cytoplasm. The protein operates within secondary metabolite biosynthesis; terpenoid biosynthesis. The sequence is that of Terpenoid synthase 29 (TPS29) from Arabidopsis thaliana (Mouse-ear cress).